The primary structure comprises 281 residues: NAD kinase (281 aa).

D61 serves as the catalytic Proton acceptor. NAD(+) is bound by residues 61–62 (DG), 134–135 (ND), R145, D164, 175–180 (TAYSLS), and Q234.

Belongs to the NAD kinase family. It depends on a divalent metal cation as a cofactor.

The protein localises to the cytoplasm. It catalyses the reaction NAD(+) + ATP = ADP + NADP(+) + H(+). In terms of biological role, involved in the regulation of the intracellular balance of NAD and NADP, and is a key enzyme in the biosynthesis of NADP. Catalyzes specifically the phosphorylation on 2'-hydroxyl of the adenosine moiety of NAD to yield NADP. The polypeptide is NAD kinase (Clostridium botulinum (strain Loch Maree / Type A3)).